The following is a 220-amino-acid chain: Ribonuclease HII (220 aa).

One can recognise an RNase H type-2 domain in the interval 27–220 (CIIVGVDEVG…SKISYMFKNS (194 aa)). Positions 33, 34, and 128 each coordinate a divalent metal cation.

The protein belongs to the RNase HII family. It depends on Mn(2+) as a cofactor. The cofactor is Mg(2+).

It is found in the cytoplasm. It carries out the reaction Endonucleolytic cleavage to 5'-phosphomonoester.. In terms of biological role, endonuclease that specifically degrades the RNA of RNA-DNA hybrids. In Ehrlichia ruminantium (strain Gardel), this protein is Ribonuclease HII.